A 202-amino-acid polypeptide reads, in one-letter code: Tetranectin (202 aa).

The first 21 residues, 1 to 21, serve as a signal peptide directing secretion; it reads MELWGAYLLLCLFSLLTQVTT. O-linked (GalNAc...) threonine glycosylation is present at threonine 25. 3 cysteine pairs are disulfide-bonded: cysteine 71-cysteine 81, cysteine 98-cysteine 197, and cysteine 173-cysteine 189. The 122-residue stretch at 77-198 folds into the C-type lectin domain; sequence VHMKCFLAFT…CRDQLPYICQ (122 aa).

In terms of assembly, homotrimer. In terms of tissue distribution, found in plasma.

The protein resides in the secreted. In terms of biological role, tetranectin binds to plasminogen and to isolated kringle 4. May be involved in the packaging of molecules destined for exocytosis. Plays a role in retinal function. The sequence is that of Tetranectin (CLEC3B) from Homo sapiens (Human).